The sequence spans 312 residues: RNA binding protein fox-1 homolog 3 (312 aa).

Residues 1–29 (MAQPYPPAQYPPPPQNGIPAEYAPPPPHP) are compositionally biased toward pro residues. Residues 1-104 (MAQPYPPAQY…KQQPKRLHVS (104 aa)) form a disordered region. The span at 49–87 (TPAQTHPEQPGSEASTQPIAGTQTVPQTDEAAQTDSQPL) shows a compositional bias: polar residues. Residues 100–175 (RLHVSNIPFR…RKIEVNNATA (76 aa)) form the RRM domain. Asymmetric dimethylarginine; alternate is present on Arg223. Position 223 is an omega-N-methylarginine; alternate (Arg223). At Arg272 the chain carries Asymmetric dimethylarginine.

Its subcellular location is the nucleus. It localises to the cytoplasm. Pre-mRNA alternative splicing regulator. Regulates alternative splicing of RBFOX2 to enhance the production of mRNA species that are targeted for nonsense-mediated decay (NMD). This Homo sapiens (Human) protein is RNA binding protein fox-1 homolog 3 (RBFOX3).